Consider the following 213-residue polypeptide: G2/mitotic-specific cyclin-1 (213 aa).

Positions 1-23 (MKFSEEKNVSNNPTNFEGGLDSR) are disordered.

It belongs to the cyclin family. Cyclin AB subfamily. Interacts with the CDC2 protein kinase to form a serine/threonine kinase holoenzyme complex also known as maturation promoting factor (MPF). The cyclin subunit imparts substrate specificity to the complex. As to expression, only expressed in organs with dividing cells.

Functionally, essential for the control of the cell cycle at the G2/M (mitosis) transition. The chain is G2/mitotic-specific cyclin-1 from Medicago sativa (Alfalfa).